The chain runs to 134 residues: MKVVHTVGKRRTAIARATATEGSGKIRINKKPLELMEPKYIKMKLMEPVILAGEILGSIDVDVDVKGGGTVSQMDAARTALGKAIIEFTGKMELKEMFLSYDRTLLVSDARRTEPHKPSKSSKGPRARRQKSYR.

A disordered region spans residues 109–134 (DARRTEPHKPSKSSKGPRARRQKSYR). Positions 118–134 (PSKSSKGPRARRQKSYR) are enriched in basic residues.

It belongs to the universal ribosomal protein uS9 family.

In Methanococcus vannielii (strain ATCC 35089 / DSM 1224 / JCM 13029 / OCM 148 / SB), this protein is Small ribosomal subunit protein uS9.